The sequence spans 257 residues: Aspartate/glutamate leucyltransferase (257 aa).

The protein belongs to the R-transferase family. Bpt subfamily.

Its subcellular location is the cytoplasm. The catalysed reaction is N-terminal L-glutamyl-[protein] + L-leucyl-tRNA(Leu) = N-terminal L-leucyl-L-glutamyl-[protein] + tRNA(Leu) + H(+). It carries out the reaction N-terminal L-aspartyl-[protein] + L-leucyl-tRNA(Leu) = N-terminal L-leucyl-L-aspartyl-[protein] + tRNA(Leu) + H(+). Functionally, functions in the N-end rule pathway of protein degradation where it conjugates Leu from its aminoacyl-tRNA to the N-termini of proteins containing an N-terminal aspartate or glutamate. In Rhodopseudomonas palustris (strain BisB5), this protein is Aspartate/glutamate leucyltransferase.